Here is a 227-residue protein sequence, read N- to C-terminus: Probable septum site-determining protein MinC (227 aa).

It belongs to the MinC family. As to quaternary structure, interacts with MinD and FtsZ.

Its function is as follows. Cell division inhibitor that blocks the formation of polar Z ring septums. Rapidly oscillates between the poles of the cell to destabilize FtsZ filaments that have formed before they mature into polar Z rings. Prevents FtsZ polymerization. The protein is Probable septum site-determining protein MinC of Shouchella clausii (strain KSM-K16) (Alkalihalobacillus clausii).